Reading from the N-terminus, the 355-residue chain is Homoserine O-succinyltransferase (355 aa).

The active-site Acyl-thioester intermediate is Cys-146. Substrate-binding residues include Lys-167 and Ser-196. His-239 serves as the catalytic Proton acceptor. The active site involves Glu-241. Substrate is bound at residue Arg-253.

The protein belongs to the MetA family.

The protein resides in the cytoplasm. It catalyses the reaction L-homoserine + succinyl-CoA = O-succinyl-L-homoserine + CoA. It participates in amino-acid biosynthesis; L-methionine biosynthesis via de novo pathway; O-succinyl-L-homoserine from L-homoserine: step 1/1. Transfers a succinyl group from succinyl-CoA to L-homoserine, forming succinyl-L-homoserine. The protein is Homoserine O-succinyltransferase of Methylococcus capsulatus (strain ATCC 33009 / NCIMB 11132 / Bath).